The primary structure comprises 285 residues: ATP synthase gamma chain (285 aa).

It belongs to the ATPase gamma chain family. In terms of assembly, F-type ATPases have 2 components, CF(1) - the catalytic core - and CF(0) - the membrane proton channel. CF(1) has five subunits: alpha(3), beta(3), gamma(1), delta(1), epsilon(1). CF(0) has three main subunits: a, b and c.

It localises to the cell membrane. In terms of biological role, produces ATP from ADP in the presence of a proton gradient across the membrane. The gamma chain is believed to be important in regulating ATPase activity and the flow of protons through the CF(0) complex. This chain is ATP synthase gamma chain, found in Lysinibacillus sphaericus (strain C3-41).